A 111-amino-acid polypeptide reads, in one-letter code: Flagellar hook-basal body complex protein FliE (111 aa).

It belongs to the FliE family.

Its subcellular location is the bacterial flagellum basal body. The chain is Flagellar hook-basal body complex protein FliE from Brucella ovis (strain ATCC 25840 / 63/290 / NCTC 10512).